Reading from the N-terminus, the 790-residue chain is Lon protease 2 (790 aa).

The 193-residue stretch at Leu18–Leu210 folds into the Lon N-terminal domain. Gly362–Thr369 serves as a coordination point for ATP. In terms of domain architecture, Lon proteolytic spans Ser598 to Pro779. Residues Ser685 and Lys728 contribute to the active site.

This sequence belongs to the peptidase S16 family. Homohexamer. Organized in a ring with a central cavity.

It localises to the cytoplasm. It catalyses the reaction Hydrolysis of proteins in presence of ATP.. Functionally, ATP-dependent serine protease that mediates the selective degradation of mutant and abnormal proteins as well as certain short-lived regulatory proteins. Required for cellular homeostasis and for survival from DNA damage and developmental changes induced by stress. Degrades polypeptides processively to yield small peptide fragments that are 5 to 10 amino acids long. Binds to DNA in a double-stranded, site-specific manner. The chain is Lon protease 2 from Syntrophobacter fumaroxidans (strain DSM 10017 / MPOB).